A 147-amino-acid chain; its full sequence is Deoxyuridine 5'-triphosphate nucleotidohydrolase (147 aa).

Residue arginine 24 participates in Mg(2+) binding. DUTP is bound by residues proline 68–serine 70, glycine 82–aspartate 85, tyrosine 88, glycine 93, isoleucine 95, and arginine 111.

It belongs to the dUTPase family.

The catalysed reaction is dUTP + H2O = dUMP + diphosphate + H(+). This enzyme is involved in nucleotide metabolism: it produces dUMP, the immediate precursor of thymidine nucleotides and it decreases the intracellular concentration of dUTP so that uracil cannot be incorporated into DNA. The protein is Deoxyuridine 5'-triphosphate nucleotidohydrolase (OPG046) of Homo sapiens (Human).